Reading from the N-terminus, the 201-residue chain is Glycerol-3-phosphate acyltransferase (201 aa).

A run of 5 helical transmembrane segments spans residues 5-25 (LLGA…FGVV), 55-75 (KMGV…ILVA), 87-107 (FWVT…VWLG), 118-138 (LGIF…GYAV), and 164-184 (TYGP…LIFV).

It belongs to the PlsY family. Probably interacts with PlsX.

Its subcellular location is the cell inner membrane. It carries out the reaction an acyl phosphate + sn-glycerol 3-phosphate = a 1-acyl-sn-glycero-3-phosphate + phosphate. Its pathway is lipid metabolism; phospholipid metabolism. In terms of biological role, catalyzes the transfer of an acyl group from acyl-phosphate (acyl-PO(4)) to glycerol-3-phosphate (G3P) to form lysophosphatidic acid (LPA). This enzyme utilizes acyl-phosphate as fatty acyl donor, but not acyl-CoA or acyl-ACP. The sequence is that of Glycerol-3-phosphate acyltransferase from Anaeromyxobacter dehalogenans (strain 2CP-1 / ATCC BAA-258).